We begin with the raw amino-acid sequence, 77 residues long: Acyl carrier protein (77 aa).

The 76-residue stretch at 1-76 (MSIEERVKKI…SAIDYVAKAN (76 aa)) folds into the Carrier domain. Serine 36 is modified (O-(pantetheine 4'-phosphoryl)serine).

Belongs to the acyl carrier protein (ACP) family. Post-translationally, 4'-phosphopantetheine is transferred from CoA to a specific serine of apo-ACP by AcpS. This modification is essential for activity because fatty acids are bound in thioester linkage to the sulfhydryl of the prosthetic group.

It localises to the cytoplasm. Its pathway is lipid metabolism; fatty acid biosynthesis. Carrier of the growing fatty acid chain in fatty acid biosynthesis. This Haemophilus ducreyi (strain 35000HP / ATCC 700724) protein is Acyl carrier protein.